We begin with the raw amino-acid sequence, 135 residues long: UPF0299 membrane protein YPK_2559 (135 aa).

3 helical membrane passes run 30-50 (LLLP…FVLL), 66-86 (LLIR…MQYY), and 93-113 (FGPI…VVAY).

It belongs to the UPF0299 family.

The protein resides in the cell inner membrane. The chain is UPF0299 membrane protein YPK_2559 from Yersinia pseudotuberculosis serotype O:3 (strain YPIII).